Reading from the N-terminus, the 262-residue chain is Indole-3-glycerol phosphate synthase (262 aa).

It belongs to the TrpC family.

The enzyme catalyses 1-(2-carboxyphenylamino)-1-deoxy-D-ribulose 5-phosphate + H(+) = (1S,2R)-1-C-(indol-3-yl)glycerol 3-phosphate + CO2 + H2O. It functions in the pathway amino-acid biosynthesis; L-tryptophan biosynthesis; L-tryptophan from chorismate: step 4/5. The protein is Indole-3-glycerol phosphate synthase of Staphylococcus epidermidis (strain ATCC 12228 / FDA PCI 1200).